Here is a 346-residue protein sequence, read N- to C-terminus: L-glyceraldehyde 3-phosphate reductase (346 aa).

NADP(+) is bound by residues Trp-33, Asp-61, Tyr-66, Ser-168, Gln-193, Thr-223, Leu-225, Gln-227, Lys-233, Ser-303, Gln-307, and Asn-311.

This sequence belongs to the shaker potassium channel beta subunit family. In terms of assembly, homotetramer. Homooctamer.

It carries out the reaction a primary alcohol + NADP(+) = an aldehyde + NADPH + H(+). The enzyme catalyses hydroxyacetone + NADP(+) = methylglyoxal + NADPH + H(+). Functionally, aldo-keto reductase that catalyzes the stereospecific, NADPH-dependent reduction of L-glyceraldehyde 3-phosphate (L-GAP) to L-glycerol 3-phosphate (L-G3P). The physiological role of Gpr is the detoxification of L-GAP, which may be formed via non-enzymatic and/or enzymatic racemization of D-GAP. Also contributes to cellular methylglyoxal detoxification by catalyzing the NADPH-dependent conversion of methylglyoxal to acetol. However, the catalytic efficiency of methylglyoxal reductase activity is more than 2 orders of magnitude lower than the L-GAP reductase activity. In addition, exhibits activity with glyoxal and probably plays a significant role in detoxification of glyoxal in vivo. Shows broad specificity and can use aromatic aldehydes such as 4-nitrobenzaldehyde and benzaldehyde, D,L-glyceraldehyde, phenylglyoxal, isatin and the model substrate 4-nitrobenzaldehyde. This is L-glyceraldehyde 3-phosphate reductase from Escherichia coli (strain K12).